We begin with the raw amino-acid sequence, 366 residues long: Mitogen-activated protein kinase CPK1 (366 aa).

A Protein kinase domain is found at 17 to 302; it reads KLEEIVGEGA…SPSKRITVEE (286 aa). ATP is bound by residues 22–30 and K45; that span reads VGEGAYGLV. The active-site Proton acceptor is D140. T181 carries the post-translational modification Phosphothreonine. The TXY signature appears at 181–183; sequence TEY. Y183 carries the post-translational modification Phosphotyrosine.

This sequence belongs to the protein kinase superfamily. CMGC Ser/Thr protein kinase family. MAP kinase subfamily. Requires Mg(2+) as cofactor. Post-translationally, dually phosphorylated on Thr-181 and Tyr-183, which activates the enzyme.

It catalyses the reaction L-seryl-[protein] + ATP = O-phospho-L-seryl-[protein] + ADP + H(+). The catalysed reaction is L-threonyl-[protein] + ATP = O-phospho-L-threonyl-[protein] + ADP + H(+). With respect to regulation, activated by tyrosine and threonine phosphorylation. Its function is as follows. Responds to activation by environmental stress by phosphorylating downstream targets. This Cryptococcus neoformans var. neoformans serotype D (strain B-3501A) (Filobasidiella neoformans) protein is Mitogen-activated protein kinase CPK1 (CPK1).